A 141-amino-acid polypeptide reads, in one-letter code: Large ribosomal subunit protein bL17 (141 aa).

Belongs to the bacterial ribosomal protein bL17 family. In terms of assembly, part of the 50S ribosomal subunit. Contacts protein L32.

This chain is Large ribosomal subunit protein bL17, found in Chlamydia trachomatis serovar D (strain ATCC VR-885 / DSM 19411 / UW-3/Cx).